Consider the following 319-residue polypeptide: 8-methylmenaquinol:fumarate reductase iron-sulfur subunit (319 aa).

One can recognise a 2Fe-2S ferredoxin-type domain in the interval 1-96; the sequence is MKFIIDRFDG…TFRISPLGNH (96 aa). [2Fe-2S] cluster-binding residues include cysteine 51, cysteine 56, cysteine 59, and cysteine 71. 4Fe-4S ferredoxin-type domains follow at residues 139-168 and 193-224; these read FDRI…QSDY and VKPA…AEDI. [4Fe-4S] cluster is bound by residues cysteine 148, cysteine 151, cysteine 154, cysteine 158, cysteine 204, cysteine 207, cysteine 210, and cysteine 214.

It belongs to the succinate dehydrogenase/fumarate reductase iron-sulfur protein family. As to quaternary structure, the MFR complex is composed of three subunits: a flavoprotein (SdhA), an iron-sulfur protein (SdhB), and one hydrophobic anchor protein (SdhE). The cofactor is [2Fe-2S] cluster. Requires [4Fe-4S] cluster as cofactor.

The protein localises to the periplasm. The protein resides in the cell membrane. It carries out the reaction 8-methylmenaquinone-6 + succinate = 8-methylmenaquinol-6 + fumarate. Its function is as follows. Iron-sulfur subunit of 8-methylmenaquinol:fumarate reductase (MFR), that catalyzes the reduction of fumarate using 8-methylmenaquinol-6 as electron donor. The complex shows no succinate oxidation activity. Is involved in anaerobic metabolism. In Wolinella succinogenes (strain ATCC 29543 / DSM 1740 / CCUG 13145 / JCM 31913 / LMG 7466 / NCTC 11488 / FDC 602W) (Vibrio succinogenes), this protein is 8-methylmenaquinol:fumarate reductase iron-sulfur subunit.